Consider the following 480-residue polypeptide: Aspartyl/glutamyl-tRNA(Asn/Gln) amidotransferase subunit B (480 aa).

Belongs to the GatB/GatE family. GatB subfamily. As to quaternary structure, heterotrimer of A, B and C subunits.

The catalysed reaction is L-glutamyl-tRNA(Gln) + L-glutamine + ATP + H2O = L-glutaminyl-tRNA(Gln) + L-glutamate + ADP + phosphate + H(+). The enzyme catalyses L-aspartyl-tRNA(Asn) + L-glutamine + ATP + H2O = L-asparaginyl-tRNA(Asn) + L-glutamate + ADP + phosphate + 2 H(+). Its function is as follows. Allows the formation of correctly charged Asn-tRNA(Asn) or Gln-tRNA(Gln) through the transamidation of misacylated Asp-tRNA(Asn) or Glu-tRNA(Gln) in organisms which lack either or both of asparaginyl-tRNA or glutaminyl-tRNA synthetases. The reaction takes place in the presence of glutamine and ATP through an activated phospho-Asp-tRNA(Asn) or phospho-Glu-tRNA(Gln). The polypeptide is Aspartyl/glutamyl-tRNA(Asn/Gln) amidotransferase subunit B (Streptococcus pneumoniae (strain CGSP14)).